Here is a 153-residue protein sequence, read N- to C-terminus: Aspartate carbamoyltransferase regulatory chain (153 aa).

Zn(2+) is bound by residues cysteine 109, cysteine 114, cysteine 138, and cysteine 141.

This sequence belongs to the PyrI family. As to quaternary structure, contains catalytic and regulatory chains. It depends on Zn(2+) as a cofactor.

Involved in allosteric regulation of aspartate carbamoyltransferase. This is Aspartate carbamoyltransferase regulatory chain from Vibrio vulnificus (strain CMCP6).